Here is an 89-residue protein sequence, read N- to C-terminus: UPF0250 protein Bphyt_0500 (89 aa).

Belongs to the UPF0250 family.

This is UPF0250 protein Bphyt_0500 from Paraburkholderia phytofirmans (strain DSM 17436 / LMG 22146 / PsJN) (Burkholderia phytofirmans).